The following is a 343-amino-acid chain: MDSTVYSTPPTNSISLAEAIKIAEARFEAAVQGCKDDWHNGNDLVILQDNIPQLFGGILVEHFKRCVGEVCGFPVELTVMDGGDNYHTLVQMPKNNMRSPQVVSSPQSAQTSPSEQTSINLKAVAAGLKKAPRPMNCWIIFRDAMHKHLKAEFPHLTIQEISTRCSHIWHNLSPEAKKPWQDAAQSAKEEHLRQHPNYKYTPRKPGEKKKRQSRKSKRAAAMTTAPEVLQFQLSPKLIPTVPEVTDEPPLAANPVTANGNNACPEDVSNCFDPNVFPEIYPEAPMAADFFYNTESIRHSLLDTEFDIDFNMDTTFALFDDEMLAFRDGADGDATLPSLFEDTY.

Disordered stretches follow at residues 98–117 and 177–223; these read RSPQ…SEQT and KKPW…AAMT. The segment covering 99-117 has biased composition (low complexity); that stretch reads SPQVVSSPQSAQTSPSEQT. Positions 131–199 form a DNA-binding region, HMG box; the sequence is APRPMNCWII…EHLRQHPNYK (69 aa). Basic residues predominate over residues 206–218; that stretch reads GEKKKRQSRKSKR.

The protein resides in the nucleus. The chain is Mating-type protein MAT-2 (MAT2) from Cochliobolus heterostrophus (Southern corn leaf blight fungus).